Reading from the N-terminus, the 106-residue chain is Immunoglobulin lambda constant 6 (106 aa).

In terms of domain architecture, Ig-like spans Pro7–Ala101. A disulfide bridge links Cys28 with Cys87.

In terms of assembly, immunoglobulins are composed of two identical heavy chains and two identical light chains; disulfide-linked.

The protein localises to the secreted. It localises to the cell membrane. Functionally, constant region of immunoglobulin light chains. Immunoglobulins, also known as antibodies, are membrane-bound or secreted glycoproteins produced by B lymphocytes. In the recognition phase of humoral immunity, the membrane-bound immunoglobulins serve as receptors which, upon binding of a specific antigen, trigger the clonal expansion and differentiation of B lymphocytes into immunoglobulins-secreting plasma cells. Secreted immunoglobulins mediate the effector phase of humoral immunity, which results in the elimination of bound antigens. The antigen binding site is formed by the variable domain of one heavy chain, together with that of its associated light chain. Thus, each immunoglobulin has two antigen binding sites with remarkable affinity for a particular antigen. The variable domains are assembled by a process called V-(D)-J rearrangement and can then be subjected to somatic hypermutations which, after exposure to antigen and selection, allow affinity maturation for a particular antigen. This Homo sapiens (Human) protein is Immunoglobulin lambda constant 6.